We begin with the raw amino-acid sequence, 460 residues long: Equilibrative nucleoside transporter 1 (460 aa).

Residues 1-12 are Cytoplasmic-facing; sequence MTTSHQPQDRYK. A helical membrane pass occupies residues 13–29; it reads AVWLIFFVLGLGTLLPW. The Extracellular portion of the chain corresponds to 30 to 82; sequence NFFMTATKYFTNRLDVSQNVSSDTDQSCESTKALADPTVALPARSSLSAIFNN. Residue asparagine 48 is glycosylated (N-linked (GlcNAc...) asparagine). Residues 83-107 form a helical membrane-spanning segment; the sequence is VMTLCAMLPLLVFTCLNSFLHQRIS. The Cytoplasmic portion of the chain corresponds to 108 to 111; the sequence is QSVR. A helical membrane pass occupies residues 112-130; that stretch reads ILGSLLAILLVFLVTAALV. Topologically, residues 131–138 are extracellular; sequence KVEMDALI. Residues 139–157 traverse the membrane as a helical segment; the sequence is FFVITMIKIVLINSFGAIL. The Cytoplasmic portion of the chain corresponds to 158-174; that stretch reads QASLFGLAGVLPANYTA. A helical membrane pass occupies residues 175-199; the sequence is PIMSGQGLAGFFTSVAMICAIASGS. The Extracellular segment spans residues 200-206; the sequence is ELSESAF. The helical transmembrane segment at 207–227 threads the bilayer; that stretch reads GYFITACAVVILAILCYLALP. At 228–291 the chain is on the cytoplasmic side; sequence RTEFYRHYLQ…IKAILKSICV (64 aa). A Phosphoserine modification is found at serine 254. Basic and acidic residues predominate over residues 255-266; sequence KGEEPKGRREES. The tract at residues 255 to 277 is disordered; it reads KGEEPKGRREESGVPGPNSPPTN. Residue serine 273 is modified to Phosphoserine. A helical membrane pass occupies residues 292–311; it reads PALSVCFIFTVTIGLFPAVT. Residues 312 to 323 are Extracellular-facing; the sequence is AEVESSIAGTSP. Residues 324–342 traverse the membrane as a helical segment; it reads WKSYFIPVACFLNFNVFDW. The Cytoplasmic segment spans residues 343-359; that stretch reads LGRSLTAVCMWPGQDSR. The chain crosses the membrane as a helical span at residues 360–378; that stretch reads WLPVLVASRIVFIPLLMLC. Topologically, residues 379–397 are extracellular; the sequence is NVKARHCGAQRHHFVFKHD. The chain crosses the membrane as a helical span at residues 398 to 417; sequence AWFIAFMAAFAFSNGYLASL. Topologically, residues 418–435 are cytoplasmic; it reads CMCFGPKKVKPAEAETAG. Residues 436 to 456 form a helical membrane-spanning segment; sequence NIMSFFLCLGLALGAVLSFLL. Topologically, residues 457–460 are extracellular; sequence RALV.

It belongs to the SLC29A/ENT transporter (TC 2.A.57) family. As to quaternary structure, identified in a complex with STOM. Glycosylated. In terms of tissue distribution, highly expressed in heart, spleen, lung, liver and testis. Lower level of expression in brain and kidney. Expressed in adipose tissues, brown adipocytes expressing significantly higher amounts than white adipocytes. Expressed in seminiferous tubules.

The protein resides in the basolateral cell membrane. It localises to the apical cell membrane. Its subcellular location is the cell membrane. It carries out the reaction adenosine(in) = adenosine(out). The catalysed reaction is guanosine(in) = guanosine(out). It catalyses the reaction inosine(in) = inosine(out). The enzyme catalyses uridine(out) = uridine(in). It carries out the reaction thymidine(in) = thymidine(out). The catalysed reaction is cytidine(in) = cytidine(out). It catalyses the reaction adenine(out) = adenine(in). The enzyme catalyses guanine(out) = guanine(in). It carries out the reaction thymine(out) = thymine(in). The catalysed reaction is uracil(in) = uracil(out). It catalyses the reaction hypoxanthine(out) = hypoxanthine(in). Transporter activity is sensitive to low concentrations of the inhibitor nitrobenzylmercaptopurine riboside (NBMPR). Functionally, uniporter involved in the facilitative transport of nucleosides and nucleobases, and contributes to maintaining their cellular homeostasis. Functions as a Na(+)-independent transporter. Involved in the transport of nucleosides such as adenosine, guanosine, inosine, uridine, thymidine and cytidine. Also transports purine (hypoxanthine, adenine, guanine) and pyrimidine nucleobases (thymine, uracil). Mediates basolateral nucleoside uptake into Sertoli cells, thereby regulating the transport of nucleosides in testis across the blood-testis-barrier. Regulates inosine levels in brown adipocytes tissues (BAT) and extracellular inosine levels, which controls BAT-dependent energy expenditure. The polypeptide is Equilibrative nucleoside transporter 1 (Mus musculus (Mouse)).